Consider the following 557-residue polypeptide: Putative glutathione-regulated potassium-efflux system protein KefB (557 aa).

10 consecutive transmembrane segments (helical) span residues 2–22 (LGYL…ISDV), 24–44 (EILH…GLEL), 56–76 (IFGV…GLLM), 84–104 (AAVV…LQLM), 121–141 (VLLF…LLAG), 146–166 (HFDW…LIGG), 176–196 (FIAA…LVLG), 199–219 (LFMD…GVLL), 237–257 (GLLL…GVLY), and 260–280 (LLWV…VLYL). Positions 356–475 (KPQVIVVGFG…AGVTQFSRET (120 aa)) constitute an RCK N-terminal domain.

It belongs to the monovalent cation:proton antiporter 2 (CPA2) transporter (TC 2.A.37) family. KefB subfamily. In terms of assembly, interacts with the regulatory subunit KefG.

It is found in the cell inner membrane. Pore-forming subunit of a potassium efflux system that confers protection against electrophiles. Catalyzes K(+)/H(+) antiport. The protein is Putative glutathione-regulated potassium-efflux system protein KefB of Shigella flexneri.